We begin with the raw amino-acid sequence, 1465 residues long: DNA polymerase III PolC-type (1465 aa).

Residues 427 to 583 form the Exonuclease domain; the sequence is YVVFDVETTG…YDAEATGRLL (157 aa).

The protein belongs to the DNA polymerase type-C family. PolC subfamily.

It is found in the cytoplasm. It catalyses the reaction DNA(n) + a 2'-deoxyribonucleoside 5'-triphosphate = DNA(n+1) + diphosphate. Functionally, required for replicative DNA synthesis. This DNA polymerase also exhibits 3' to 5' exonuclease activity. This chain is DNA polymerase III PolC-type, found in Streptococcus pyogenes serotype M2 (strain MGAS10270).